The following is a 397-amino-acid chain: Neuroplastin (397 aa).

A signal peptide spans 1-28 (MSGSSLPGALALSLLLVSGSLLPGPGAA). Ig-like domains follow at residues 29-134 (QNAG…PSIT), 148-234 (PRIV…IEVK), and 237-327 (PDIT…ASVS). Over 29 to 338 (QNAGFVKSPM…VLRVRSHLAP (310 aa)) the chain is Extracellular. An intrachain disulfide couples Cys-52 to Cys-116. Residues 149–161 (RIVTSEEVIIRES) form a narpin; mediates binding with FGFR1 and has antidepressant-like activity region. The cysteines at positions 169 and 217 are disulfide-linked. N-linked (GlcNAc...) asparagine glycans are attached at residues Asn-170, Asn-196, Asn-228, Asn-283, Asn-295, and Asn-316. Cys-258 and Cys-315 are disulfide-bonded. Residues 339 to 359 (LWPFLGILAEIIILVVIIVVY) traverse the membrane as a helical segment. The Cytoplasmic segment spans residues 360–397 (EKRKRPDEVPDDDEPAGPMKTNSTNNHKDKNLRQRNTN). The interval 364–397 (RPDEVPDDDEPAGPMKTNSTNNHKDKNLRQRNTN) is disordered.

Interacts with ATP2B1; this interaction stabilizes ATP2B1 and increases ATPase activity; this interaction controls T cell calcium homeostasis following T cell activation. Interacts with XKR8; promoting its localization at the cell membrane. N-glycosylated. As to expression, isoform 1 and isoform 2 are widely expressed with variable levels in brain. Isoform 1 is expressed in cerebellum and midbrain. Isoform 1 and isoform 2 are expressed in cerebral cortex, hippocampus and striatum. Isoform 2 is more abundant in the cerebral cortex than isoform 1.

It localises to the cell membrane. The protein resides in the postsynaptic density. Functionally, probable homophilic and heterophilic cell adhesion molecule involved in long term potentiation at hippocampal excitatory synapses through activation of p38MAPK. May also regulate neurite outgrowth by activating the FGFR1 signaling pathway. May play a role in synaptic plasticity. Also acts as a chaperone for ATP2B1; stabilizes ATP2B1 and increases its ATPase activity. Promotes localization of XKR8 at the cell membrane. This Mus musculus (Mouse) protein is Neuroplastin (Nptn).